Consider the following 183-residue polypeptide: ATP synthase subunit delta (183 aa).

Belongs to the ATPase delta chain family. As to quaternary structure, F-type ATPases have 2 components, F(1) - the catalytic core - and F(0) - the membrane proton channel. F(1) has five subunits: alpha(3), beta(3), gamma(1), delta(1), epsilon(1). F(0) has three main subunits: a(1), b(2) and c(10-14). The alpha and beta chains form an alternating ring which encloses part of the gamma chain. F(1) is attached to F(0) by a central stalk formed by the gamma and epsilon chains, while a peripheral stalk is formed by the delta and b chains.

The protein resides in the cell inner membrane. Functionally, f(1)F(0) ATP synthase produces ATP from ADP in the presence of a proton or sodium gradient. F-type ATPases consist of two structural domains, F(1) containing the extramembraneous catalytic core and F(0) containing the membrane proton channel, linked together by a central stalk and a peripheral stalk. During catalysis, ATP synthesis in the catalytic domain of F(1) is coupled via a rotary mechanism of the central stalk subunits to proton translocation. Its function is as follows. This protein is part of the stalk that links CF(0) to CF(1). It either transmits conformational changes from CF(0) to CF(1) or is implicated in proton conduction. This chain is ATP synthase subunit delta, found in Vesicomyosocius okutanii subsp. Calyptogena okutanii (strain HA).